Reading from the N-terminus, the 435-residue chain is Serine/threonine-protein kinase 40 (435 aa).

The span at 1-10 (MKRRASDRGA) shows a compositional bias: basic and acidic residues. A disordered region spans residues 1-25 (MKRRASDRGAGETSARAKALGSGIS). The Protein kinase domain maps to 35 to 332 (FILGPRLGNS…DVLEALSAII (298 aa)). ATP-binding positions include 41–49 (LGNSPVPSI) and Lys-66. The active-site Proton acceptor is the Asp-197.

This sequence belongs to the protein kinase superfamily. CAMK Ser/Thr protein kinase family.

It is found in the nucleus. The protein localises to the cytoplasm. The catalysed reaction is L-seryl-[protein] + ATP = O-phospho-L-seryl-[protein] + ADP + H(+). The enzyme catalyses L-threonyl-[protein] + ATP = O-phospho-L-threonyl-[protein] + ADP + H(+). Functionally, may be a negative regulator of NF-kappa-B and p53-mediated gene transcription. This chain is Serine/threonine-protein kinase 40 (STK40), found in Pongo abelii (Sumatran orangutan).